The primary structure comprises 323 residues: Germination protease (323 aa).

Positions 1 to 6 are excised as a propeptide; the sequence is MSVRTD.

It belongs to the peptidase A25 family. As to quaternary structure, homotetramer. Autoproteolytically processed. The inactive tetrameric zymogen termed p46 autoprocesses to a smaller form termed p41, which is active only during spore germination.

The catalysed reaction is Endopeptidase action with P4 Glu or Asp, P1 preferably Glu &gt; Asp, P1' hydrophobic and P2' Ala.. Its function is as follows. Initiates the rapid degradation of small, acid-soluble proteins during spore germination. The sequence is that of Germination protease from Clostridium tetani (strain Massachusetts / E88).